The following is a 130-amino-acid chain: Ribosome-binding factor A (130 aa).

Belongs to the RbfA family. Monomer. Binds 30S ribosomal subunits, but not 50S ribosomal subunits or 70S ribosomes.

It localises to the cytoplasm. In terms of biological role, one of several proteins that assist in the late maturation steps of the functional core of the 30S ribosomal subunit. Associates with free 30S ribosomal subunits (but not with 30S subunits that are part of 70S ribosomes or polysomes). Required for efficient processing of 16S rRNA. May interact with the 5'-terminal helix region of 16S rRNA. This chain is Ribosome-binding factor A, found in Lachnospira eligens (strain ATCC 27750 / DSM 3376 / VPI C15-48 / C15-B4) (Eubacterium eligens).